We begin with the raw amino-acid sequence, 360 residues long: Glutamate 5-kinase (360 aa).

Lysine 7 lines the ATP pocket. Substrate-binding residues include serine 47, aspartate 134, and asparagine 146. Residues 166 to 167 (TD) and 210 to 216 (TGGISTK) each bind ATP. Residues 275–356 (VGKITLDDGA…SSIIVVHRDV (82 aa)) enclose the PUA domain.

It belongs to the glutamate 5-kinase family.

The protein localises to the cytoplasm. The enzyme catalyses L-glutamate + ATP = L-glutamyl 5-phosphate + ADP. It participates in amino-acid biosynthesis; L-proline biosynthesis; L-glutamate 5-semialdehyde from L-glutamate: step 1/2. Its function is as follows. Catalyzes the transfer of a phosphate group to glutamate to form L-glutamate 5-phosphate. This chain is Glutamate 5-kinase, found in Prochlorococcus marinus (strain MIT 9301).